The sequence spans 131 residues: Ribosome-binding factor A (131 aa).

The protein belongs to the RbfA family. In terms of assembly, monomer. Binds 30S ribosomal subunits, but not 50S ribosomal subunits or 70S ribosomes.

Its subcellular location is the cytoplasm. One of several proteins that assist in the late maturation steps of the functional core of the 30S ribosomal subunit. Associates with free 30S ribosomal subunits (but not with 30S subunits that are part of 70S ribosomes or polysomes). Required for efficient processing of 16S rRNA. May interact with the 5'-terminal helix region of 16S rRNA. The polypeptide is Ribosome-binding factor A (Pseudomonas fluorescens (strain SBW25)).